The following is a 193-amino-acid chain: Phosphoheptose isomerase (193 aa).

The region spanning 37–193 is the SIS domain; sequence LADSFKAGGK…MLIEKEMAKG (157 aa). 52-54 lines the substrate pocket; it reads NGG. Residues histidine 61 and glutamate 65 each coordinate Zn(2+). Substrate is bound by residues glutamate 65, 93–94, 119–121, serine 124, and glutamine 172; these read ND and STS. Positions 172 and 180 each coordinate Zn(2+).

Belongs to the SIS family. GmhA subfamily. Homotetramer. Zn(2+) is required as a cofactor.

It is found in the cytoplasm. It catalyses the reaction 2 D-sedoheptulose 7-phosphate = D-glycero-alpha-D-manno-heptose 7-phosphate + D-glycero-beta-D-manno-heptose 7-phosphate. The protein operates within carbohydrate biosynthesis; D-glycero-D-manno-heptose 7-phosphate biosynthesis; D-glycero-alpha-D-manno-heptose 7-phosphate and D-glycero-beta-D-manno-heptose 7-phosphate from sedoheptulose 7-phosphate: step 1/1. Functionally, catalyzes the isomerization of sedoheptulose 7-phosphate in D-glycero-D-manno-heptose 7-phosphate. This is Phosphoheptose isomerase from Klebsiella pneumoniae subsp. pneumoniae (strain ATCC 700721 / MGH 78578).